Here is a 380-residue protein sequence, read N- to C-terminus: 4-hydroxy-tetrahydrodipicolinate synthase, chloroplastic (380 aa).

The tract at residues 1 to 44 (MISPTNLLPARKITPVSNGGAATASPSSPSVAARPRRLPSGLQS) is disordered. Residues 1–54 (MISPTNLLPARKITPVSNGGAATASPSSPSVAARPRRLPSGLQSVTGRGKVSLA) constitute a chloroplast transit peptide. The span at 21–33 (AATASPSSPSVAA) shows a compositional bias: low complexity. T123 is a binding site for pyruvate. The active-site Proton donor/acceptor is the Y209. K237 acts as the Schiff-base intermediate with substrate in catalysis. I276 serves as a coordination point for pyruvate.

This sequence belongs to the DapA family. Tetramer of modified subunits derived from two genes in different combinations.

Its subcellular location is the plastid. It is found in the chloroplast. It carries out the reaction L-aspartate 4-semialdehyde + pyruvate = (2S,4S)-4-hydroxy-2,3,4,5-tetrahydrodipicolinate + H2O + H(+). It participates in amino-acid biosynthesis; L-lysine biosynthesis via DAP pathway; (S)-tetrahydrodipicolinate from L-aspartate: step 3/4. With respect to regulation, sensitive to lysine inhibition. This inhibition increase in an allosteric manner with increasing concentration of the inhibitor. Catalyzes the condensation of (S)-aspartate-beta-semialdehyde [(S)-ASA] and pyruvate to 4-hydroxy-tetrahydrodipicolinate (HTPA). This Zea mays (Maize) protein is 4-hydroxy-tetrahydrodipicolinate synthase, chloroplastic.